A 577-amino-acid polypeptide reads, in one-letter code: Proline--tRNA ligase (577 aa).

Belongs to the class-II aminoacyl-tRNA synthetase family. ProS type 1 subfamily. As to quaternary structure, homodimer.

It is found in the cytoplasm. It catalyses the reaction tRNA(Pro) + L-proline + ATP = L-prolyl-tRNA(Pro) + AMP + diphosphate. In terms of biological role, catalyzes the attachment of proline to tRNA(Pro) in a two-step reaction: proline is first activated by ATP to form Pro-AMP and then transferred to the acceptor end of tRNA(Pro). As ProRS can inadvertently accommodate and process non-cognate amino acids such as alanine and cysteine, to avoid such errors it has two additional distinct editing activities against alanine. One activity is designated as 'pretransfer' editing and involves the tRNA(Pro)-independent hydrolysis of activated Ala-AMP. The other activity is designated 'posttransfer' editing and involves deacylation of mischarged Ala-tRNA(Pro). The misacylated Cys-tRNA(Pro) is not edited by ProRS. This Marinobacter nauticus (strain ATCC 700491 / DSM 11845 / VT8) (Marinobacter aquaeolei) protein is Proline--tRNA ligase.